The chain runs to 331 residues: Glycerophosphodiester phosphodiesterase 1 (331 aa).

Residues 1–3 (MWL) are Cytoplasmic-facing. The chain crosses the membrane as a helical span at residues 4 to 24 (WEDQGGLLGPFSFLLLVLLLV). The Lumenal portion of the chain corresponds to 25-247 (TRSPVNACLL…KPRYDTFWKH (223 aa)). The GP-PDE domain occupies 65–331 (ISAIAHRGGS…SMVEDCEPHF (267 aa)). Glutamate 97 and aspartate 99 together coordinate Mg(2+). An N-linked (GlcNAc...) asparagine glycan is attached at asparagine 168. A Mg(2+)-binding site is contributed by aspartate 174. N-linked (GlcNAc...) asparagine glycosylation occurs at asparagine 198. Residues 248 to 268 (FIFVMMDILLDWSMHNILWYL) form a helical membrane-spanning segment. Residues 269-331 (CGISAFLMQK…SMVEDCEPHF (63 aa)) are Cytoplasmic-facing.

This sequence belongs to the glycerophosphoryl diester phosphodiesterase family. Interacts with PRAF2. Interacts with RGS16. Mg(2+) serves as cofactor. In terms of processing, N-glycosylated. Widely expressed.

The protein localises to the cell membrane. It is found in the cytoplasmic vesicle membrane. It catalyses the reaction sn-glycero-3-phospho-1D-myo-inositol + H2O = myo-inositol + sn-glycerol 3-phosphate + H(+). The catalysed reaction is 1-O-(1Z-octadecenyl)-sn-glycero-3-phospho-(N-5Z,8Z,11Z,14Z-eicosatetraenoyl)-ethanolamine + H2O = 1-O-(1Z-octadecenyl)-sn-glycero-3-phosphate + N-(5Z,8Z,11Z,14Z-eicosatetraenoyl)-ethanolamine + H(+). The enzyme catalyses 1-O-(1Z-octadecenyl)-sn-glycero-3-phospho-(N-9Z-octadecenoyl)-ethanolamine + H2O = 1-O-(1Z-octadecenyl)-sn-glycero-3-phosphate + N-(9Z-octadecenoyl) ethanolamine + H(+). It carries out the reaction 1-O-(1Z-octadecenyl)-sn-glycero-3-phospho-N-hexadecanoyl-ethanolamine + H2O = 1-O-(1Z-octadecenyl)-sn-glycero-3-phosphate + N-hexadecanoylethanolamine + H(+). It catalyses the reaction N-(4Z,7Z,10Z,13Z,16Z,19Z)-docosahexaenoyl-sn-glycero-3-phosphoethanolamine + H2O = N-(4Z,7Z,10Z,13Z,16Z,19Z)-docosahexaenoyl ethanolamine + sn-glycerol 3-phosphate + H(+). The catalysed reaction is N-eicosanoyl-sn-glycero-3-phosphoethanolamine + H2O = N-eicosanoyl ethanolamine + sn-glycerol 3-phosphate + H(+). The enzyme catalyses N-hexadecanoyl-sn-glycero-3-phosphoethanolamine + H2O = N-hexadecanoylethanolamine + sn-glycerol 3-phosphate + H(+). It carries out the reaction N-(9Z-octadecenoyl)-sn-glycero-3-phosphoethanolamine + H2O = N-(9Z-octadecenoyl) ethanolamine + sn-glycerol 3-phosphate + H(+). It catalyses the reaction N-(5Z,8Z,11Z,14Z-eicosatetraenoyl)-sn-glycero-3-phosphoethanolamine + H2O = N-(5Z,8Z,11Z,14Z-eicosatetraenoyl)-ethanolamine + sn-glycerol 3-phosphate + H(+). Inhibited by EDTA, calcium chloride, and zinc chloride. Enhanced by magnesium chloride. Glycerophosphodiester phosphodiesterase activity can be modulated by G-protein signaling pathways. Functionally, hydrolyzes the phosphodiester bond of glycerophosphodiesters such as glycerophosphoinositol (GroPIns) and glycerophosphoethanolamine (GroPEth), to yield a glycerol phosphate and an alcohol. Hydrolyzes glycerophospho-N-acylethanolamines to N-acylethanolamines in the brain and participates in bioactive N-acylethanolamine biosynthesis such as anandamide (an endocannabinoid), N-palmitoylethanolamine (an anti-inflammatory), and N-oleoylethanolamine (an anorexic). In addition, has a lysophospholipase D activity by hydrolyzing N-acyl-lysoplasmenylethanolamine (N-acyl-lysoPlsEt) to N-acylethanolamine. However lysophospholipase D activity is lower than glycerophosphodiester phosphodiesterase activity. Has little or no activity towards glycerophosphocholine. The protein is Glycerophosphodiester phosphodiesterase 1 of Homo sapiens (Human).